The following is a 573-amino-acid chain: Probable D-xylulose kinase A (573 aa).

Substrate contacts are provided by His97, Arg168, Asp284, and Asn285. ATP contacts are provided by residues Trp366, 471–472, and Asn475; that span reads GG.

Belongs to the FGGY kinase family.

It localises to the cytoplasm. The enzyme catalyses D-xylulose + ATP = D-xylulose 5-phosphate + ADP + H(+). In terms of biological role, highly specific D-xylulose kinase which participates in the catabolism of xylose. Xylose is a major component of hemicelluloses such as xylan. Most fungi utilize D-xylose via three enzymatic reactions, xylose reductase (XR), xylitol dehydrogenase (XDH), and xylulokinase, to form xylulose 5-phosphate, which enters pentose phosphate pathway. The chain is Probable D-xylulose kinase A (xkiA) from Neosartorya fischeri (strain ATCC 1020 / DSM 3700 / CBS 544.65 / FGSC A1164 / JCM 1740 / NRRL 181 / WB 181) (Aspergillus fischerianus).